A 116-amino-acid polypeptide reads, in one-letter code: Nucleoid-associated protein MLBr02330 (116 aa).

The interval Leu-96 to Thr-116 is disordered.

It belongs to the YbaB/EbfC family. Homodimer.

Its subcellular location is the cytoplasm. The protein localises to the nucleoid. Functionally, binds to DNA and alters its conformation. May be involved in regulation of gene expression, nucleoid organization and DNA protection. This is Nucleoid-associated protein MLBr02330 from Mycobacterium leprae (strain Br4923).